Here is a 439-residue protein sequence, read N- to C-terminus: Enolase (439 aa).

Substrate contacts are provided by H157 and E166. E209 acts as the Proton donor in catalysis. Mg(2+)-binding residues include D244, E297, and D324. Residues E297 and D324 each coordinate substrate. K349 acts as the Proton acceptor in catalysis. Substrate-binding positions include 376–379 (SHRS) and K400.

It belongs to the enolase family. As to quaternary structure, homodimer. The cofactor is Mg(2+).

It is found in the cytoplasm. The catalysed reaction is (2R)-2-phosphoglycerate = phosphoenolpyruvate + H2O. It participates in carbohydrate degradation; glycolysis; pyruvate from D-glyceraldehyde 3-phosphate: step 4/5. The sequence is that of Enolase (ENOL) from Mastigamoeba balamuthi (Phreatamoeba balamuthi).